The chain runs to 89 residues: Small ribosomal subunit protein uS15 (89 aa).

This sequence belongs to the universal ribosomal protein uS15 family. Part of the 30S ribosomal subunit. Forms a bridge to the 50S subunit in the 70S ribosome, contacting the 23S rRNA.

One of the primary rRNA binding proteins, it binds directly to 16S rRNA where it helps nucleate assembly of the platform of the 30S subunit by binding and bridging several RNA helices of the 16S rRNA. Functionally, forms an intersubunit bridge (bridge B4) with the 23S rRNA of the 50S subunit in the ribosome. The polypeptide is Small ribosomal subunit protein uS15 (Bordetella parapertussis (strain 12822 / ATCC BAA-587 / NCTC 13253)).